The following is a 373-amino-acid chain: MNLGLNVKEIERYDLVILLMAVALTCFGVVMVYSASSVMATKKFHDGFYFLKRQGVYALLGFGVMAVAMRIDYRTWREYAVPILLGCLFLLFLVFIPGIGGAAKGASRWIRLPGFNFQPSELTKIALIVYMAYSLDKKQDKVKFFSTGFLPYMVLLSVVLLILLKQHDLGAALTMGLVAIIMLFAAGTRPRYIIAMGMMALPILYFLVMNVDYRRRRILAYLNPWEDPTDTGFQIIQSWLAFGNGGVLGQGLGEGKQKMFYLPEAHTDFILSVTGEELGLIGVTVIAAMFLMLVLRGVRVALMAQEPFGRFLAFGIATLLGIQSFVNMAVVTGLLPTKGLALPFISYGGSSLIVTLFAVGILLNISTRLKGAP.

9 consecutive transmembrane segments (helical) span residues 15–35, 48–68, 80–100, 144–164, 168–188, 192–212, 278–298, 311–331, and 342–362; these read LVIL…VYSA, FYFL…MAVA, AVPI…PGIG, FFST…LILL, DLGA…AAGT, YIIA…MNVD, LGLI…LRGV, FLAF…MAVV, and LPFI…VGIL.

The protein belongs to the SEDS family. FtsW subfamily.

Its subcellular location is the cell inner membrane. It catalyses the reaction [GlcNAc-(1-&gt;4)-Mur2Ac(oyl-L-Ala-gamma-D-Glu-L-Lys-D-Ala-D-Ala)](n)-di-trans,octa-cis-undecaprenyl diphosphate + beta-D-GlcNAc-(1-&gt;4)-Mur2Ac(oyl-L-Ala-gamma-D-Glu-L-Lys-D-Ala-D-Ala)-di-trans,octa-cis-undecaprenyl diphosphate = [GlcNAc-(1-&gt;4)-Mur2Ac(oyl-L-Ala-gamma-D-Glu-L-Lys-D-Ala-D-Ala)](n+1)-di-trans,octa-cis-undecaprenyl diphosphate + di-trans,octa-cis-undecaprenyl diphosphate + H(+). Its pathway is cell wall biogenesis; peptidoglycan biosynthesis. Functionally, peptidoglycan polymerase that is essential for cell division. This chain is Probable peptidoglycan glycosyltransferase FtsW, found in Geobacter sulfurreducens (strain DL-1 / KN400).